The following is a 143-amino-acid chain: Papain inhibitor (143 aa).

An N-terminal signal peptide occupies residues 1 to 33 (MREFRRVRRVRFAACALVAAATGITLAAGPASA).

In terms of assembly, monomer.

It localises to the secreted. Functionally, stress protein produced under hyperthermal stress conditions. Serves as a glutamine and lysine donor substrate for transglutaminase. Inhibits the cysteine proteases papain and bromelain as well as the bovine serine protease trypsin. Has hardly any or no effect on subtilisin, bovine chymotrypsin, proteinase K from T.album, transglutaminase-activating metalloproteinase (TAMEP) from S.mobaraensis, dispase from B.polymyxa, thermolysin from B.thermoproteolyticus or collagenase from C.histolyticum. This is Papain inhibitor (pi) from Streptomyces mobaraensis (Streptoverticillium mobaraense).